Here is a 407-residue protein sequence, read N- to C-terminus: Phosphopentomutase (407 aa).

Mn(2+) contacts are provided by D10, D306, H311, D347, H348, and H359.

The protein belongs to the phosphopentomutase family. The cofactor is Mn(2+).

It is found in the cytoplasm. The enzyme catalyses 2-deoxy-alpha-D-ribose 1-phosphate = 2-deoxy-D-ribose 5-phosphate. It catalyses the reaction alpha-D-ribose 1-phosphate = D-ribose 5-phosphate. It participates in carbohydrate degradation; 2-deoxy-D-ribose 1-phosphate degradation; D-glyceraldehyde 3-phosphate and acetaldehyde from 2-deoxy-alpha-D-ribose 1-phosphate: step 1/2. Its function is as follows. Isomerase that catalyzes the conversion of deoxy-ribose 1-phosphate (dRib-1-P) and ribose 1-phosphate (Rib-1-P) to deoxy-ribose 5-phosphate (dRib-5-P) and ribose 5-phosphate (Rib-5-P), respectively. The protein is Phosphopentomutase of Erwinia tasmaniensis (strain DSM 17950 / CFBP 7177 / CIP 109463 / NCPPB 4357 / Et1/99).